The chain runs to 247 residues: Probable transcriptional regulatory protein MS0710 (247 aa).

The protein belongs to the TACO1 family.

Its subcellular location is the cytoplasm. The polypeptide is Probable transcriptional regulatory protein MS0710 (Mannheimia succiniciproducens (strain KCTC 0769BP / MBEL55E)).